Consider the following 516-residue polypeptide: Levanbiose-producing levanase (516 aa).

Over 1 to 5 the chain is Cytoplasmic; that stretch reads MNYIK. Residues 6–26 form a helical membrane-spanning segment; it reads AGKWLTVFLTFLGILLFIDLF. Residues 27-516 lie on the Extracellular side of the membrane; that stretch reads PKEEHDQKTK…TVKHFDSIHE (490 aa). Substrate is bound by residues 55 to 58, 116 to 117, 181 to 182, E230, and W318; these read WKND, WT, and RD. D58 is an active-site residue.

This sequence belongs to the glycosyl hydrolase 32 family.

The protein resides in the cell membrane. It catalyses the reaction Hydrolysis of (2-&gt;6)-beta-D-fructofuranan, to remove successive disaccharide residues as levanbiose, i.e. 6-(beta-D-fructofuranosyl)-D-fructose, from the end of the chain.. Functionally, catalyzes the degradation of levan mainly into levanbiose (difructose). Is not active on sucrose. The protein is Levanbiose-producing levanase (levB) of Bacillus subtilis (strain 168).